Reading from the N-terminus, the 210-residue chain is Isochorismatase domain-containing protein 2 (210 aa).

A Phosphoserine modification is found at S7.

It belongs to the isochorismatase family. As to quaternary structure, interacts with CDKN2A.

The protein localises to the cytoplasm. It localises to the nucleus. This is Isochorismatase domain-containing protein 2 (Isoc2) from Rattus norvegicus (Rat).